The chain runs to 143 residues: Transcriptional regulator SlyA (143 aa).

The HTH marR-type domain maps to 2–135 (ESTLGSDLSR…LTNLVERLEQ (134 aa)). A DNA-binding region (H-T-H motif) is located at residues 49 to 72 (QIQLAKAIGIEQPSLVRTLDQLED).

This sequence belongs to the SlyA family. Homodimer.

Transcription regulator that can specifically activate or repress expression of target genes. The sequence is that of Transcriptional regulator SlyA from Edwardsiella tarda.